The sequence spans 314 residues: Formimidoylglutamase (314 aa).

The Mn(2+) site is built by H127, D153, H155, D157, D245, and D247.

Belongs to the arginase family. The cofactor is Mn(2+).

The catalysed reaction is N-formimidoyl-L-glutamate + H2O = formamide + L-glutamate. It functions in the pathway amino-acid degradation; L-histidine degradation into L-glutamate; L-glutamate from N-formimidoyl-L-glutamate (hydrolase route): step 1/1. In terms of biological role, catalyzes the conversion of N-formimidoyl-L-glutamate to L-glutamate and formamide. This chain is Formimidoylglutamase, found in Aeromonas salmonicida (strain A449).